Reading from the N-terminus, the 423-residue chain is Adenylosuccinate synthetase (423 aa).

Residues 11–17 (GDEGKGK) and 39–41 (GHT) each bind GTP. D12 (proton acceptor) is an active-site residue. Mg(2+)-binding residues include D12 and G39. IMP contacts are provided by residues 12 to 15 (DEGK), 37 to 40 (NAGH), T129, R143, N219, T234, and R298. Catalysis depends on H40, which acts as the Proton donor. 294-300 (VTTGRRR) contacts substrate. GTP is bound by residues R300, 326–328 (KLD), and 411–413 (GTG).

The protein belongs to the adenylosuccinate synthetase family. In terms of assembly, homodimer. Mg(2+) is required as a cofactor.

The protein resides in the cytoplasm. It carries out the reaction IMP + L-aspartate + GTP = N(6)-(1,2-dicarboxyethyl)-AMP + GDP + phosphate + 2 H(+). The protein operates within purine metabolism; AMP biosynthesis via de novo pathway; AMP from IMP: step 1/2. Plays an important role in the de novo pathway and in the salvage pathway of purine nucleotide biosynthesis. Catalyzes the first committed step in the biosynthesis of AMP from IMP. The protein is Adenylosuccinate synthetase of Penicillium rubens (strain ATCC 28089 / DSM 1075 / NRRL 1951 / Wisconsin 54-1255) (Penicillium chrysogenum).